The primary structure comprises 316 residues: 4-hydroxy-3-methylbut-2-enyl diphosphate reductase (316 aa).

Cys-12 lines the [4Fe-4S] cluster pocket. Positions 41 and 74 each coordinate (2E)-4-hydroxy-3-methylbut-2-enyl diphosphate. Positions 41 and 74 each coordinate dimethylallyl diphosphate. Residues His-41 and His-74 each contribute to the isopentenyl diphosphate site. Cys-96 is a binding site for [4Fe-4S] cluster. His-124 is a binding site for (2E)-4-hydroxy-3-methylbut-2-enyl diphosphate. His-124 is a dimethylallyl diphosphate binding site. His-124 is a binding site for isopentenyl diphosphate. Glu-126 functions as the Proton donor in the catalytic mechanism. Position 169 (Thr-169) interacts with (2E)-4-hydroxy-3-methylbut-2-enyl diphosphate. Cys-199 contributes to the [4Fe-4S] cluster binding site. (2E)-4-hydroxy-3-methylbut-2-enyl diphosphate contacts are provided by Ser-227, Ser-228, Asn-229, and Ser-271. 4 residues coordinate dimethylallyl diphosphate: Ser-227, Ser-228, Asn-229, and Ser-271. The isopentenyl diphosphate site is built by Ser-227, Ser-228, Asn-229, and Ser-271.

The protein belongs to the IspH family. It depends on [4Fe-4S] cluster as a cofactor.

The enzyme catalyses isopentenyl diphosphate + 2 oxidized [2Fe-2S]-[ferredoxin] + H2O = (2E)-4-hydroxy-3-methylbut-2-enyl diphosphate + 2 reduced [2Fe-2S]-[ferredoxin] + 2 H(+). The catalysed reaction is dimethylallyl diphosphate + 2 oxidized [2Fe-2S]-[ferredoxin] + H2O = (2E)-4-hydroxy-3-methylbut-2-enyl diphosphate + 2 reduced [2Fe-2S]-[ferredoxin] + 2 H(+). It participates in isoprenoid biosynthesis; dimethylallyl diphosphate biosynthesis; dimethylallyl diphosphate from (2E)-4-hydroxy-3-methylbutenyl diphosphate: step 1/1. The protein operates within isoprenoid biosynthesis; isopentenyl diphosphate biosynthesis via DXP pathway; isopentenyl diphosphate from 1-deoxy-D-xylulose 5-phosphate: step 6/6. Functionally, catalyzes the conversion of 1-hydroxy-2-methyl-2-(E)-butenyl 4-diphosphate (HMBPP) into a mixture of isopentenyl diphosphate (IPP) and dimethylallyl diphosphate (DMAPP). Acts in the terminal step of the DOXP/MEP pathway for isoprenoid precursor biosynthesis. This Xylella fastidiosa (strain M23) protein is 4-hydroxy-3-methylbut-2-enyl diphosphate reductase.